A 26-amino-acid chain; its full sequence is DSPGGASDAQKQHDVNSILXKVYXEI.

The protein belongs to the tyrosinase family. Hemocyanin subfamily. As to expression, hemolymph.

It is found in the secreted. The protein localises to the extracellular space. Functionally, hemocyanins are copper-containing oxygen carriers occurring freely dissolved in the hemolymph of many mollusks and arthropods. This Carcinus maenas (Common shore crab) protein is Hemocyanin subunit B.